We begin with the raw amino-acid sequence, 496 residues long: Iroquois-class homeodomain protein irx-4-A (496 aa).

The segment at residues 141–203 (GSSRRKNATR…NARRRLKKEN (63 aa)) is a DNA-binding region (homeobox; TALE-type). Residues 203-246 (NKMTWPPRNKCSDEKRPYDEEEEEEEEEEDSQKATIKNEKKTVD) are disordered. Positions 221–232 (DEEEEEEEEEED) are enriched in acidic residues.

This sequence belongs to the TALE/IRO homeobox family. Expressed in the neural plate in overlapping patterns with other irx members, which all share an anterior border of expression. At stage 20, expressed in a subset of cells in the developing hindbrain with expression appearing above the otic vesicle by stage 26. Expression in retina cells begins at stage 28, continuing at later stages and is limited to a subset of retinal cells of the optic cup. Also expressed in the ventricle of the heart from stage 36 (late tailbud) onwards. Only expressed in the pronephros at tadpole stage.

It localises to the nucleus. Acts partially redundantly with other irx members in neural patterning. Required for formation of the posterior forebrain, midbrain, hindbrain, and to a lesser extent, spinal cord. Patterns the neuroectoderm in both the anterior/posterior and dorsal/ventral axes. Does not appear to play a role in pronephros kidney development. This Xenopus laevis (African clawed frog) protein is Iroquois-class homeodomain protein irx-4-A (irx4-a).